The primary structure comprises 171 residues: Laminin subunit beta-1 (171 aa).

An N-terminal signal peptide occupies residues 1-29 (MNGRTQNLWFSTFRLVIVYALFFAKLCFG). Intrachain disulfides connect cysteine 59-cysteine 69, cysteine 72-cysteine 81, cysteine 84-cysteine 100, cysteine 103-cysteine 118, and cysteine 105-cysteine 128. Laminin EGF-like domains are found at residues 66–102 (TGVCNNCLHNTKGTNCQLCKDGYYGNALLGTENVCQR), 103–160 (CQCP…TCKK), and 161–171 (CLCNGNINSAS). Asparagine 130 is a glycosylation site (N-linked (GlcNAc...) asparagine). 2 disulfide bridges follow: cysteine 131/cysteine 140 and cysteine 143/cysteine 158.

As to quaternary structure, laminin is a complex glycoprotein, consisting of three different polypeptide chains (alpha, beta, gamma), which are bound to each other by disulfide bonds into a cross-shaped molecule comprising one long and three short arms with globules at each end.

It localises to the secreted. It is found in the extracellular space. Its subcellular location is the extracellular matrix. The protein resides in the basement membrane. Its function is as follows. Binding to cells via a high affinity receptor, laminin is thought to mediate the attachment, migration and organization of cells into tissues during embryonic development by interacting with other extracellular matrix components. The polypeptide is Laminin subunit beta-1 (Hydra vulgaris (Hydra)).